The chain runs to 194 residues: Phosphoprotein p30 (194 aa).

Belongs to the asfivirus phosphoprotein p30 family. Oligomer. Interacts with host HNRNPK. In terms of processing, phosphorylated on serine residues in the 115 N-terminal amino acids.

Its subcellular location is the host cytoplasm. The protein localises to the host nucleus. It is found in the virion. Its function is as follows. Modifies the subcellular distribution of heterogeneous nuclear ribonucleoprotein K (HNRNPK) and may contribute to modulate HNRNPK functions related to processing and export of mRNAs during ASFV infection. Necessary for virus internalization. The sequence is that of Phosphoprotein p30 from Ornithodoros (relapsing fever ticks).